Here is a 728-residue protein sequence, read N- to C-terminus: Rho-related BTB domain-containing protein 2 (728 aa).

The tract at residues 1–210 (MDSDMDYERP…DNAIRAALIS (210 aa)) is rho-like. Residues 21-28 (GDNAVGKT), 84-88 (DTFGD), and 140-143 (CQLD) contribute to the GTP site. BTB domains lie at 266 to 333 (ADVI…HHHH) and 500 to 567 (SDVT…TSSP). The segment covering 304–313 (ELGGPSGSGG) has biased composition (gly residues). The interval 304-333 (ELGGPSGSGGPRPEDHRSHPEQHHHHHHHH) is disordered. Basic and acidic residues predominate over residues 315-324 (RPEDHRSHPE). Residues 703-728 (FWNSPSSPSSSAAGSASPSSSSSAVV) are disordered. Over residues 706–728 (SPSSPSSSAAGSASPSSSSSAVV) the composition is skewed to low complexity.

It belongs to the small GTPase superfamily. Rho family. In terms of assembly, interacts with HSP90AA1 and HSP90AB1. Forms a complex with CUL3 and RBX1. Interacts (via BTB 1 domain) with CUL3. Interacts with MSI2. Autoubiquitinated by RHOBTB2-CUL3-RBX1 ubiquitin ligase complex. Expressed in most tissues, with highest expression in brain.

Functionally, regulator of cell proliferation and apoptosis. It likely functions as a substrate-adapter that recruits key substrates, e.g. MSI2, to CUL3-based ubiquitin ligase complexes for degradation. Required for MSI2 ubiquitination and degradation. The sequence is that of Rho-related BTB domain-containing protein 2 (Rhobtb2) from Mus musculus (Mouse).